Here is a 231-residue protein sequence, read N- to C-terminus: Urease accessory protein UreE (231 aa).

Positions 185 to 231 (VASPLDEPHGSGLHIHGIHSHGEGHSHGDHDHDHSHSHGDHDHDHKH) are disordered. Basic and acidic residues predominate over residues 204–231 (SHGEGHSHGDHDHDHSHSHGDHDHDHKH).

It belongs to the UreE family.

It localises to the cytoplasm. In terms of biological role, involved in urease metallocenter assembly. Binds nickel. Probably functions as a nickel donor during metallocenter assembly. The sequence is that of Urease accessory protein UreE from Yersinia pseudotuberculosis serotype O:1b (strain IP 31758).